A 445-amino-acid chain; its full sequence is Chromosome partition protein MukF (445 aa).

The leucine-zipper stretch occupies residues 213–241 (LSETSNTLKELQDTLQAAGDELQTQILDI).

The protein belongs to the MukF family. As to quaternary structure, interacts, and probably forms a ternary complex, with MukE and MukB via its C-terminal region. The complex formation is stimulated by calcium or magnesium. It is required for an interaction between MukE and MukB.

It localises to the cytoplasm. Its subcellular location is the nucleoid. In terms of biological role, involved in chromosome condensation, segregation and cell cycle progression. May participate in facilitating chromosome segregation by condensation DNA from both sides of a centrally located replisome during cell division. Not required for mini-F plasmid partitioning. Probably acts via its interaction with MukB and MukE. Overexpression results in anucleate cells. It has a calcium binding activity. The protein is Chromosome partition protein MukF of Vibrio vulnificus (strain CMCP6).